The following is a 458-amino-acid chain: RuvB-like helicase 1 (458 aa).

Position 71–78 (71–78) interacts with ATP; it reads GGPGTGKT.

The protein belongs to the RuvB family. In terms of assembly, may form heterododecamers with hel-2/rvb2. Component of the SWR1 chromatin remodeling complex, the INO80 chromatin remodeling complex, and of the R2TP complex.

It is found in the nucleus. It catalyses the reaction ATP + H2O = ADP + phosphate + H(+). Functionally, DNA helicase which participates in several chromatin remodeling complexes, including the SWR1 and the INO80 complexes. The SWR1 complex mediates the ATP-dependent exchange of histone H2A for the H2A variant H2A.Z leading to transcriptional regulation of selected genes by chromatin remodeling. The INO80 complex remodels chromatin by shifting nucleosomes and is involved in DNA repair. Also involved in pre-rRNA processing. This is RuvB-like helicase 1 (hel-1) from Neurospora crassa (strain ATCC 24698 / 74-OR23-1A / CBS 708.71 / DSM 1257 / FGSC 987).